The chain runs to 205 residues: Ephrin-A1 (205 aa).

The signal sequence occupies residues 1-18 (MEFFWASLLGLCCSLAAA). Positions 19–151 (NRHTVFWNSS…RLKVMIAGKI (133 aa)) constitute an Ephrin RBD domain. Asn26 is a glycosylation site (N-linked (GlcNAc...) asparagine). 2 disulfide bridges follow: Cys51–Cys92 and Cys80–Cys140. Ser182 is lipidated: GPI-anchor amidated serine. Residues 183–205 (AAPRLFPLAWAVLLLPFLLLQIP) constitute a propeptide, removed in mature form.

This sequence belongs to the ephrin family. Monomer. Homodimer. Forms heterodimers with EPHA2. Binds to the receptor tyrosine kinases EPHA2, EPHA3, EPHA4, EPHA5, EPHA6 and EPHA7. Also binds with low affinity to EPHA1. Undergoes proteolysis by a metalloprotease to give rise to a soluble monomeric form. Post-translationally, N-Glycosylation is required for binding to EPHA2 receptor and inducing its internalization.

It localises to the cell membrane. The protein localises to the secreted. Cell surface GPI-bound ligand for Eph receptors, a family of receptor tyrosine kinases which are crucial for migration, repulsion and adhesion during neuronal, vascular and epithelial development. Binds promiscuously Eph receptors residing on adjacent cells, leading to contact-dependent bidirectional signaling into neighboring cells. Plays an important role in angiogenesis and tumor neovascularization. The recruitment of VAV2, VAV3 and PI3-kinase p85 subunit by phosphorylated EPHA2 is critical for EFNA1-induced RAC1 GTPase activation and vascular endothelial cell migration and assembly. Exerts anti-oncogenic effects in tumor cells through activation and down-regulation of EPHA2. Activates EPHA2 by inducing tyrosine phosphorylation which leads to its internalization and degradation. Acts as a negative regulator in the tumorigenesis of gliomas by down-regulating EPHA2 and FAK. Can evoke collapse of embryonic neuronal growth cone and regulates dendritic spine morphogenesis. This chain is Ephrin-A1 (EFNA1), found in Bos taurus (Bovine).